A 166-amino-acid polypeptide reads, in one-letter code: Ribosome-binding factor A (166 aa).

A disordered region spans residues 122-166; the sequence is LASTAEHAGDADPYRVDTEDDDDDTDGADAEARSDADVRRGPQSG. Residues 128-138 are compositionally biased toward basic and acidic residues; sequence HAGDADPYRVD. Over residues 139 to 150 the composition is skewed to acidic residues; sequence TEDDDDDTDGAD. Residues 151–166 are compositionally biased toward basic and acidic residues; it reads AEARSDADVRRGPQSG.

The protein belongs to the RbfA family. As to quaternary structure, monomer. Binds 30S ribosomal subunits, but not 50S ribosomal subunits or 70S ribosomes.

It is found in the cytoplasm. One of several proteins that assist in the late maturation steps of the functional core of the 30S ribosomal subunit. Associates with free 30S ribosomal subunits (but not with 30S subunits that are part of 70S ribosomes or polysomes). Required for efficient processing of 16S rRNA. May interact with the 5'-terminal helix region of 16S rRNA. The chain is Ribosome-binding factor A from Saccharopolyspora erythraea (strain ATCC 11635 / DSM 40517 / JCM 4748 / NBRC 13426 / NCIMB 8594 / NRRL 2338).